A 163-amino-acid polypeptide reads, in one-letter code: Thiol peroxidase (163 aa).

Residues L16–N162 form the Thioredoxin domain. The Cysteine sulfenic acid (-SOH) intermediate role is filled by C58. A disulfide bridge connects residues C58 and C92.

It belongs to the peroxiredoxin family. Tpx subfamily. As to quaternary structure, homodimer.

It catalyses the reaction a hydroperoxide + [thioredoxin]-dithiol = an alcohol + [thioredoxin]-disulfide + H2O. Its function is as follows. Thiol-specific peroxidase that catalyzes the reduction of hydrogen peroxide and organic hydroperoxides to water and alcohols, respectively. Plays a role in cell protection against oxidative stress by detoxifying peroxides. This Streptococcus gordonii protein is Thiol peroxidase.